The following is a 495-amino-acid chain: DNA double-strand break repair helicase HerA (495 aa).

Residues arginine 141, 150–155 (GSGKSN), and 458–459 (KI) contribute to the ATP site.

This sequence belongs to the HerA family. Forms a hexamer or a heptamer. Interacts with Mre11.

The enzyme catalyses Couples ATP hydrolysis with the unwinding of duplex DNA at the replication fork by translocating in the 5'-3' direction. This creates two antiparallel DNA single strands (ssDNA). The leading ssDNA polymer is the template for DNA polymerase III holoenzyme which synthesizes a continuous strand.. It catalyses the reaction ATP + H2O = ADP + phosphate + H(+). It carries out the reaction Couples ATP hydrolysis with the unwinding of duplex DNA by translocating in the 3'-5' direction.. ATPase activity is slightly stimulated by either circular single- or double-stranded (ds)DNA with a weak preference for dsDNA. Helicase activity is stimulated by Mre11. Functionally, involved in DNA double-strand break (DSB) repair. Probably acts with NurA to stimulate resection of the 5' strand and produce the long 3' single-strand that is required for RadA loading. Has DNA-dependent ATPase activity and bidirectional DNA helicase activity. Loads on either a 3' or a 5' DNA tail for subsequent DNA unwinding. Can also unwind blunt-ended dsDNA, Holliday junction and splayed-arm DNA. This chain is DNA double-strand break repair helicase HerA, found in Sulfurisphaera tokodaii (strain DSM 16993 / JCM 10545 / NBRC 100140 / 7) (Sulfolobus tokodaii).